The sequence spans 517 residues: Ribose import ATP-binding protein RbsA 1 (517 aa).

2 ABC transporter domains span residues 11-251 (LEMR…VGRD) and 263-507 (YDPG…ALAT). 43-50 (GENGAGKS) is an ATP binding site.

This sequence belongs to the ABC transporter superfamily. Ribose importer (TC 3.A.1.2.1) family. The complex is composed of an ATP-binding protein (RbsA), two transmembrane proteins (RbsC) and a solute-binding protein (RbsB).

It localises to the cell inner membrane. The enzyme catalyses D-ribose(out) + ATP + H2O = D-ribose(in) + ADP + phosphate + H(+). In terms of biological role, part of the ABC transporter complex RbsABC involved in ribose import. Responsible for energy coupling to the transport system. The polypeptide is Ribose import ATP-binding protein RbsA 1 (Burkholderia cenocepacia (strain HI2424)).